We begin with the raw amino-acid sequence, 724 residues long: Protein BCH1 (724 aa).

Positions 51 to 65 (TTATASANDNGATSN) are enriched in low complexity. The tract at residues 51 to 71 (TTATASANDNGATSNINGQDP) is disordered. A CHS5-binding region spans residues 711-724 (LNFLKNFTNDTFDN).

Belongs to the CHAPS family. Component of the CHS5/6 complex composed of the 4 CHAPS proteins BCH1, BCH2, BUD7, and CHS6 as well as at least CHS5 and GTP-bound ARF1. The complex interacts with the cargo protein CHS3.

The protein localises to the golgi apparatus. It is found in the trans-Golgi network membrane. In terms of biological role, member of the CHS5-ARF1P-binding proteins (CHAPS) which mediates export of specific cargo proteins, including chitin synthase CHS3. In Saccharomyces cerevisiae (strain ATCC 204508 / S288c) (Baker's yeast), this protein is Protein BCH1 (BCH1).